The primary structure comprises 995 residues: Translation initiation factor IF-2 (995 aa).

The segment at 53-399 is disordered; sequence NNAGSPAPAA…SGAPRGQGQV (347 aa). 2 stretches are compositionally biased toward pro residues: residues 60–87 and 104–119; these read PAAP…PPGG and TPGP…PPQS. Low complexity predominate over residues 135-160; that stretch reads AAAEARAAALKAEQEAAVKAAQAARQ. Residues 161-171 are compositionally biased toward basic and acidic residues; it reads QQRENVRREPP. Residues 177-192 are compositionally biased toward pro residues; that stretch reads RPGPRPGPGTMPPRPG. Residues 193–202 are compositionally biased toward low complexity; the sequence is SPAAGRSGAP. 2 stretches are compositionally biased toward pro residues: residues 203-213 and 242-264; these read APGPGPRPGGR and RPSP…PSPA. The span at 273-363 shows a compositional bias: gly residues; the sequence is RPGGPGSGRP…GAAGAFGRPG (91 aa). Over residues 367–376 the composition is skewed to basic residues; sequence TRGRKSKKQR. The tr-type G domain maps to 486–658; it reads SRPPVVTVMG…VLLTADASLE (173 aa). The segment at 495–502 is G1; that stretch reads GHVDHGKT. 495–502 is a GTP binding site; the sequence is GHVDHGKT. The tract at residues 520 to 524 is G2; that stretch reads GITQH. The interval 545–548 is G3; that stretch reads DTPG. GTP-binding positions include 545–549 and 599–602; these read DTPGH and NKID. A G4 region spans residues 599-602; the sequence is NKID. The G5 stretch occupies residues 635–637; that stretch reads AAK.

This sequence belongs to the TRAFAC class translation factor GTPase superfamily. Classic translation factor GTPase family. IF-2 subfamily.

The protein localises to the cytoplasm. One of the essential components for the initiation of protein synthesis. Protects formylmethionyl-tRNA from spontaneous hydrolysis and promotes its binding to the 30S ribosomal subunits. Also involved in the hydrolysis of GTP during the formation of the 70S ribosomal complex. This is Translation initiation factor IF-2 from Salinispora arenicola (strain CNS-205).